The primary structure comprises 582 residues: MSFHSFYQRASSLFKAYPSTSKILLLSTFSGGGGVLVYSDSNPLKRILHADATLDSDGNPIRKKKVVVLGSGWSGYSFLSYLNNPNYDVQVVSPRNFFLFTPLLPSVTNGTVEARSIVEPIRGLMRKKGFEYKEAECVKIDASNKKIHCRSKEGSSLKGTTEFDMDYDILILAVGAKPNTFNTPGVEEHAYFLKEAEDALNIRHSVIDCFERASLPNLTEEERKKILHFVVVGGGPTGVEFSAELHDFLVQDVAKIYPKVQEFTKITLLEAGDHILNMFDKRITAFAEEKFQRDGIDLKTGSMVVGVTADEISTKERETGKIVSEPYGMVVWSTGIGSRPVIKDFMQQIGQGQRRVLATDEWLRVEGCDGVYALGDTATINQRRVMEDIAAIFNKADKGNTGTLKKKDFNSVVKDICQRYPQVELYLKKNKLKNIANLLKSANGEDTQVNIEKFKQALSEVDSQMKNLPATAQVASQQGKYLAKCFNKMEKCEKKPEGPLRFRGEGRHRFQPFRYRHFGSFAPLGGEQTAAELPGDWVSIGHSSQWLWYSVYASKLVSWRTRMLVISDWTRRFVFGRDSSSI.

A mitochondrion-targeting transit peptide spans 1-39 (MSFHSFYQRASSLFKAYPSTSKILLLSTFSGGGGVLVYS). Residue 65-95 (KVVVLGSGWSGYSFLSYLNNPNYDVQVVSPR) participates in FAD binding. Residue 227-263 (LHFVVVGGGPTGVEFSAELHDFLVQDVAKIYPKVQEF) participates in NAD(+) binding. The region spanning 384 to 419 (RVMEDIAAIFNKADKGNTGTLKKKDFNSVVKDICQR) is the EF-hand domain. Ca(2+) is bound by residues D397, T401, T403, and D408. Positions 573-582 (FVFGRDSSSI) match the Microbody targeting signal motif.

The protein belongs to the NADH dehydrogenase family. Requires FAD as cofactor. As to expression, expressed in seedlings, roots, cotyledons, stems, buds and flowers and, to a lower extent, in stems and leaves.

It is found in the mitochondrion inner membrane. Its subcellular location is the peroxisome. The enzyme catalyses a quinone + NADH + H(+) = a quinol + NAD(+). It carries out the reaction a ubiquinone + NADH + H(+) = a ubiquinol + NAD(+). With respect to regulation, no effect of calcium ions on activity. Alternative NADH-ubiquinone oxidoreductase which catalyzes the oxidation of mitochondrial NADH does not translocate protons across the inner mitochondrial membrane. NAD(P)H dehydrogenase; more efficient on NADH. This Arabidopsis thaliana (Mouse-ear cress) protein is External alternative NAD(P)H-ubiquinone oxidoreductase B4, mitochondrial (NDB4).